An 871-amino-acid polypeptide reads, in one-letter code: Ubiquitin carboxyl-terminal hydrolase 8 (871 aa).

In terms of domain architecture, DUSP spans 4 to 99; it reads TSPDESPDST…GETGEASVSG (96 aa). The 591-residue stretch at 279 to 869 folds into the USP domain; it reads TGLQNLGNTC…AAYVLFYKRL (591 aa). The active-site Nucleophile is cysteine 288. Positions 615–650 are disordered; it reads ENLENPTEEEATDKTDTDGTTSVEDTNSTDVKETTE. Catalysis depends on histidine 828, which acts as the Proton acceptor.

It belongs to the peptidase C19 family.

The enzyme catalyses Thiol-dependent hydrolysis of ester, thioester, amide, peptide and isopeptide bonds formed by the C-terminal Gly of ubiquitin (a 76-residue protein attached to proteins as an intracellular targeting signal).. Recognizes and hydrolyzes the peptide bond at the C-terminal Gly of ubiquitin. Involved in the processing of poly-ubiquitin precursors as well as that of ubiquitinated proteins. This is Ubiquitin carboxyl-terminal hydrolase 8 (UBP8) from Arabidopsis thaliana (Mouse-ear cress).